We begin with the raw amino-acid sequence, 252 residues long: MERVLIVNADDFGLSKGQNYGIVEAYRNGVVTSTTALVNGEAIDHAAQLSRELPALGVGMHFVLTLGKPVSEMPGLTRDGLLGKWIWQMAEEDTLPLDEIAHELACQYQRFIDVFGREPTHLDSHHHVHMFPQIFPIVAHFAAQRGIALRIDRQTVLNADDLPSDLRSTQGFSSEFYGEEITEACFLRILDASAHRGEASLEVMCHPAFVDNIIRQSAYCYPRLTELEVLTSASLKAAIAERGYRPGCFLDI.

Positions 61 and 125 each coordinate Mg(2+).

It belongs to the YdjC deacetylase family. ChbG subfamily. As to quaternary structure, homodimer. It depends on Mg(2+) as a cofactor.

It is found in the cytoplasm. It catalyses the reaction N,N'-diacetylchitobiose + H2O = N-acetyl-beta-D-glucosaminyl-(1-&gt;4)-D-glucosamine + acetate. The enzyme catalyses diacetylchitobiose-6'-phosphate + H2O = N'-monoacetylchitobiose-6'-phosphate + acetate. The protein operates within glycan degradation; chitin degradation. In terms of biological role, involved in the degradation of chitin. ChbG is essential for growth on the acetylated chitooligosaccharides chitobiose and chitotriose but is dispensable for growth on cellobiose and chitosan dimer, the deacetylated form of chitobiose. Deacetylation of chitobiose-6-P and chitotriose-6-P is necessary for both the activation of the chb promoter by the regulatory protein ChbR and the hydrolysis of phosphorylated beta-glucosides by the phospho-beta-glucosidase ChbF. Catalyzes the removal of only one acetyl group from chitobiose-6-P to yield monoacetylchitobiose-6-P, the inducer of ChbR and the substrate of ChbF. This is Chitooligosaccharide deacetylase from Salmonella enteritidis PT4 (strain P125109).